Consider the following 206-residue polypeptide: Small ribosomal subunit protein uS5 (206 aa).

Positions 1–15 (MTDTPTKQEIQSKND) are enriched in polar residues. Residues 1–50 (MTDTPTKQEIQSKNDNVPAATPVEQKKNNRNDRKRNRRGDSKNLERDSDW) are disordered. The span at 38-50 (RGDSKNLERDSDW) shows a compositional bias: basic and acidic residues. In terms of domain architecture, S5 DRBM spans 50-113 (WQERVVQIRR…SDGKKNLVRV (64 aa)).

This sequence belongs to the universal ribosomal protein uS5 family. Part of the 30S ribosomal subunit. Contacts proteins S4 and S8.

Functionally, with S4 and S12 plays an important role in translational accuracy. Its function is as follows. Located at the back of the 30S subunit body where it stabilizes the conformation of the head with respect to the body. This is Small ribosomal subunit protein uS5 from Prochlorococcus marinus (strain AS9601).